The chain runs to 161 residues: Ribosome maturation factor RimP (161 aa).

This sequence belongs to the RimP family.

Its subcellular location is the cytoplasm. Functionally, required for maturation of 30S ribosomal subunits. The chain is Ribosome maturation factor RimP from Desulfosudis oleivorans (strain DSM 6200 / JCM 39069 / Hxd3) (Desulfococcus oleovorans).